The following is a 576-amino-acid chain: RING finger and SPRY domain-containing protein 1 (576 aa).

Residues 1-16 form the signal peptide; that stretch reads MIVLGWAVFLASRSLG. Ser-50 bears the Phosphoserine mark. Residues 50-99 are disordered; it reads SGTDDSVDTQQQQAENSAVPTADTRSQPRDPVRPPRRGRGPHEPRRKKQN. Residues 57-68 show a composition bias toward polar residues; that stretch reads DTQQQQAENSAV. Over residues 83-97 the composition is skewed to basic residues; the sequence is PPRRGRGPHEPRRKK. A B30.2/SPRY domain is found at 300–483; it reads LFLKEGRQLT…CEFNFGAKPF (184 aa). An N-linked (GlcNAc...) asparagine glycan is attached at Asn-314. Residues 527–562 form an RING-type zinc finger; the sequence is CSLCCDEVADTQLKPCGHSDLCMDCALQLETCPLCR.

The protein resides in the secreted. The sequence is that of RING finger and SPRY domain-containing protein 1 (RSPRY1) from Macaca fascicularis (Crab-eating macaque).